A 160-amino-acid polypeptide reads, in one-letter code: Putative transcriptional regulator protein YobU (160 aa).

The protein is Putative transcriptional regulator protein YobU (yobU) of Bacillus subtilis (strain 168).